The sequence spans 294 residues: 4-hydroxy-tetrahydrodipicolinate synthase (294 aa).

A pyruvate-binding site is contributed by T47. The active-site Proton donor/acceptor is Y136. Catalysis depends on K164, which acts as the Schiff-base intermediate with substrate. V206 serves as a coordination point for pyruvate.

This sequence belongs to the DapA family. As to quaternary structure, homotetramer; dimer of dimers.

It localises to the cytoplasm. It carries out the reaction L-aspartate 4-semialdehyde + pyruvate = (2S,4S)-4-hydroxy-2,3,4,5-tetrahydrodipicolinate + H2O + H(+). It participates in amino-acid biosynthesis; L-lysine biosynthesis via DAP pathway; (S)-tetrahydrodipicolinate from L-aspartate: step 3/4. Its function is as follows. Catalyzes the condensation of (S)-aspartate-beta-semialdehyde [(S)-ASA] and pyruvate to 4-hydroxy-tetrahydrodipicolinate (HTPA). This is 4-hydroxy-tetrahydrodipicolinate synthase from Nostoc sp. (strain PCC 7120 / SAG 25.82 / UTEX 2576).